The chain runs to 122 residues: Small ribosomal subunit protein uS13 (122 aa).

The interval 99 to 122 (RGQRTHTNARTRKGPAKAIAGKKK) is disordered.

This sequence belongs to the universal ribosomal protein uS13 family. Part of the 30S ribosomal subunit. Forms a loose heterodimer with protein S19. Forms two bridges to the 50S subunit in the 70S ribosome.

Located at the top of the head of the 30S subunit, it contacts several helices of the 16S rRNA. In the 70S ribosome it contacts the 23S rRNA (bridge B1a) and protein L5 of the 50S subunit (bridge B1b), connecting the 2 subunits; these bridges are implicated in subunit movement. Contacts the tRNAs in the A and P-sites. In Rhizobium etli (strain ATCC 51251 / DSM 11541 / JCM 21823 / NBRC 15573 / CFN 42), this protein is Small ribosomal subunit protein uS13.